We begin with the raw amino-acid sequence, 126 residues long: MSKPSYVKFEVPQELADKVLEAVKKAKDSGKIKKGTNETTKAVERSQAKLVVIAEDVQPEEIVAHLPLLCEEKKIPYVYVPSKKSLGEACGLQVAAASVALMDPGEAKDLVDEIVKRVNEIKGKSS.

This sequence belongs to the eukaryotic ribosomal protein eL8 family. Part of the 50S ribosomal subunit. Probably part of the RNase P complex.

It localises to the cytoplasm. Multifunctional RNA-binding protein that recognizes the K-turn motif in ribosomal RNA, the RNA component of RNase P, box H/ACA, box C/D and box C'/D' sRNAs. This Sulfolobus acidocaldarius (strain ATCC 33909 / DSM 639 / JCM 8929 / NBRC 15157 / NCIMB 11770) protein is Large ribosomal subunit protein eL8.